The chain runs to 298 residues: Tritrans,polycis-undecaprenyl-diphosphate synthase (geranylgeranyl-diphosphate specific) (298 aa).

The active site involves Asp-35. Mg(2+) is bound at residue Asp-35. Substrate-binding positions include 36-39 (GNRR), Arg-48, His-52, and 80-82 (STE). Asn-83 functions as the Proton acceptor in the catalytic mechanism. Substrate contacts are provided by residues Phe-84, Arg-86, Arg-208, and 214 to 216 (RIS).

The protein belongs to the UPP synthase family. In terms of assembly, homodimer. It depends on Mg(2+) as a cofactor.

The catalysed reaction is geranylgeranyl diphosphate + 7 isopentenyl diphosphate = tri-trans,hepta-cis-undecaprenyl diphosphate + 7 diphosphate. Its function is as follows. Catalyzes the sequential condensation of isopentenyl diphosphate (IPP) with geranylgeranyl diphosphate (GGPP) to yield (2Z,6Z,10Z,14Z,18Z,22Z,26Z,30E,34E,38E)-undecaprenyl diphosphate (tritrans,heptacis-UPP). It is probably the precursor of glycosyl carrier lipids. This chain is Tritrans,polycis-undecaprenyl-diphosphate synthase (geranylgeranyl-diphosphate specific), found in Methanosarcina mazei (strain ATCC BAA-159 / DSM 3647 / Goe1 / Go1 / JCM 11833 / OCM 88) (Methanosarcina frisia).